An 86-amino-acid chain; its full sequence is Putative membrane protein insertion efficiency factor (86 aa).

The interval 64-86 (GVDPVPKKSSSKTSTTACGCGHS) is disordered. Residues 70-79 (KKSSSKTSTT) are compositionally biased toward low complexity.

The protein belongs to the UPF0161 family.

It is found in the cell inner membrane. Could be involved in insertion of integral membrane proteins into the membrane. This Janthinobacterium sp. (strain Marseille) (Minibacterium massiliensis) protein is Putative membrane protein insertion efficiency factor.